The primary structure comprises 141 residues: Large ribosomal subunit protein uL22 (141 aa).

Belongs to the universal ribosomal protein uL22 family. In terms of assembly, part of the 50S ribosomal subunit.

In terms of biological role, this protein binds specifically to 23S rRNA; its binding is stimulated by other ribosomal proteins, e.g. L4, L17, and L20. It is important during the early stages of 50S assembly. It makes multiple contacts with different domains of the 23S rRNA in the assembled 50S subunit and ribosome. Its function is as follows. The globular domain of the protein is located near the polypeptide exit tunnel on the outside of the subunit, while an extended beta-hairpin is found that lines the wall of the exit tunnel in the center of the 70S ribosome. In Frankia casuarinae (strain DSM 45818 / CECT 9043 / HFP020203 / CcI3), this protein is Large ribosomal subunit protein uL22.